The following is a 52-amino-acid chain: MDKALLSLTHEQQQAAVEQIQQLMKQGISSGEAIQIVANRLRESHQRTNEQK.

It belongs to the UPF0181 family.

The protein is UPF0181 protein HD_1137 of Haemophilus ducreyi (strain 35000HP / ATCC 700724).